We begin with the raw amino-acid sequence, 315 residues long: DNA-directed RNA polymerase subunit alpha (315 aa).

Residues 1 to 228 (MLEIEKPKIE…EHLRLFIGLT (228 aa)) form an alpha N-terminal domain (alpha-NTD) region. The interval 246-315 (DKILEMTIEE…LGLSLRQEDE (70 aa)) is alpha C-terminal domain (alpha-CTD).

The protein belongs to the RNA polymerase alpha chain family. As to quaternary structure, homodimer. The RNAP catalytic core consists of 2 alpha, 1 beta, 1 beta' and 1 omega subunit. When a sigma factor is associated with the core the holoenzyme is formed, which can initiate transcription.

The catalysed reaction is RNA(n) + a ribonucleoside 5'-triphosphate = RNA(n+1) + diphosphate. Its function is as follows. DNA-dependent RNA polymerase catalyzes the transcription of DNA into RNA using the four ribonucleoside triphosphates as substrates. This Desulforamulus reducens (strain ATCC BAA-1160 / DSM 100696 / MI-1) (Desulfotomaculum reducens) protein is DNA-directed RNA polymerase subunit alpha.